Here is a 644-residue protein sequence, read N- to C-terminus: 1-deoxy-D-xylulose-5-phosphate synthase (644 aa).

Thiamine diphosphate is bound by residues His-78 and 120–122; that span reads GHA. Asp-150 serves as a coordination point for Mg(2+). Residues 151–152, Asn-179, and Glu-374 each bind thiamine diphosphate; that span reads AA. A Mg(2+)-binding site is contributed by Asn-179.

It belongs to the transketolase family. DXPS subfamily. As to quaternary structure, homodimer. Requires Mg(2+) as cofactor. It depends on thiamine diphosphate as a cofactor.

It catalyses the reaction D-glyceraldehyde 3-phosphate + pyruvate + H(+) = 1-deoxy-D-xylulose 5-phosphate + CO2. The protein operates within metabolic intermediate biosynthesis; 1-deoxy-D-xylulose 5-phosphate biosynthesis; 1-deoxy-D-xylulose 5-phosphate from D-glyceraldehyde 3-phosphate and pyruvate: step 1/1. Catalyzes the acyloin condensation reaction between C atoms 2 and 3 of pyruvate and glyceraldehyde 3-phosphate to yield 1-deoxy-D-xylulose-5-phosphate (DXP). The sequence is that of 1-deoxy-D-xylulose-5-phosphate synthase from Chlamydia pneumoniae (Chlamydophila pneumoniae).